The primary structure comprises 37 residues: Mu-agatoxin-Aa1d (37 aa).

Disulfide bonds link C2–C18, C9–C23, C17–C33, and C25–C31. N37 carries the post-translational modification Asparagine amide.

This sequence belongs to the neurotoxin 07 (Beta/delta-agtx) family. 03 (aga-4) subfamily. Aga sub-subfamily. As to expression, expressed by the venom gland.

It is found in the secreted. Functionally, insecticidal neurotoxin that induces an irreversible spastic paralysis when injected into insects. Modifies presynaptic voltage-gated sodium channels (Nav), causing them to open at the normal resting potential of the nerve. This leads to spontaneous release of neurotransmitter and repetitive action potentials in motor neurons. The chain is Mu-agatoxin-Aa1d from Agelenopsis aperta (North American funnel-web spider).